A 355-amino-acid chain; its full sequence is Erythronate-4-phosphate dehydrogenase (355 aa).

Positions 45 and 66 each coordinate substrate. Asp146 serves as a coordination point for NAD(+). Arg206 is an active-site residue. An NAD(+)-binding site is contributed by Asp229. Glu234 is an active-site residue. The active-site Proton donor is His251. NAD(+) is bound at residue Gly254. Tyr255 contributes to the substrate binding site.

This sequence belongs to the D-isomer specific 2-hydroxyacid dehydrogenase family. PdxB subfamily. In terms of assembly, homodimer.

Its subcellular location is the cytoplasm. It catalyses the reaction 4-phospho-D-erythronate + NAD(+) = (R)-3-hydroxy-2-oxo-4-phosphooxybutanoate + NADH + H(+). It functions in the pathway cofactor biosynthesis; pyridoxine 5'-phosphate biosynthesis; pyridoxine 5'-phosphate from D-erythrose 4-phosphate: step 2/5. Functionally, catalyzes the oxidation of erythronate-4-phosphate to 3-hydroxy-2-oxo-4-phosphonooxybutanoate. This Acinetobacter baylyi (strain ATCC 33305 / BD413 / ADP1) protein is Erythronate-4-phosphate dehydrogenase.